Consider the following 170-residue polypeptide: MHYNTSLLCDIYADTVDVVEPLLTNFGGRNSFAGEVVTIKCFESVGLIYKALEENGLGKVLLVDGGGSLRRALVNAHIAELAVENGWEGIVVNGCVREVDLLEDLDIGIQAITAIPVGAEDTQIGEVNSPVNFAGVTFLPEDILYADSTGIIISPEPLNAEALTESDEIA.

This sequence belongs to the RraA family. In terms of assembly, homotrimer. Binds to both RNA-binding sites in the C-terminal region of Rne and to RhlB.

The protein localises to the cytoplasm. Its function is as follows. Globally modulates RNA abundance by binding to RNase E (Rne) and regulating its endonucleolytic activity. Can modulate Rne action in a substrate-dependent manner by altering the composition of the degradosome. Modulates RNA-binding and helicase activities of the degradosome. In Psychromonas ingrahamii (strain DSM 17664 / CCUG 51855 / 37), this protein is Regulator of ribonuclease activity A.